The following is a 472-amino-acid chain: Trigger factor (472 aa).

The region spanning glycine 174–proline 261 is the PPIase FKBP-type domain. A disordered region spans residues glutamate 430–alanine 472. The segment covering alanine 452 to alanine 464 has biased composition (basic residues).

Belongs to the FKBP-type PPIase family. Tig subfamily.

It localises to the cytoplasm. It carries out the reaction [protein]-peptidylproline (omega=180) = [protein]-peptidylproline (omega=0). Its function is as follows. Involved in protein export. Acts as a chaperone by maintaining the newly synthesized protein in an open conformation. Functions as a peptidyl-prolyl cis-trans isomerase. The sequence is that of Trigger factor from Parasynechococcus marenigrum (strain WH8102).